A 290-amino-acid polypeptide reads, in one-letter code: Picrinine-N-methytransferase (290 aa).

Residues 71–80 form an SAM motif I region; that stretch reads MLDVGCGIGG. A Vacuolar targeting signal motif is present at residues 133-139; that stretch reads DGTFDLV. Residues 134–142 form an SAM motif II region; it reads GTFDLVFTI. The segment at 161–170 is SAM motif III; the sequence is VAAPGAPIVI.

Belongs to the class I-like SAM-binding methyltransferase superfamily. gTMT family. As to quaternary structure, homodimer. In terms of tissue distribution, accumulates in tissues actively synthesizing monoterpenoid indole alkaloids (MIAs) (at protein level). Mainly expressed in young leaves and, to a lower extent, in roots and stems.

The protein localises to the vacuole membrane. The catalysed reaction is picrinine + S-adenosyl-L-methionine = ervincine + S-adenosyl-L-homocysteine + H(+). Its pathway is alkaloid biosynthesis; vindoline biosynthesis. S-adenosyl-L-methionine-dependent N-methyltransferase involved in the biosynthesis of biologically active monoterpenoid indole alkaloids (MIAs) natural products including vindoline. Catalyzes the conversion of picrinine to N-methylpicrinine (ervincine). Also accepts, with low efficiency, 21-hydroxycyclolochnericine and norajmaline as substrates. This is Picrinine-N-methytransferase from Rauvolfia serpentina (Serpentine wood).